The following is a 219-amino-acid chain: Ribosome maturation factor RimP (219 aa).

A disordered region spans residues 195–219 (EGRIPGDDLGAEPEDVASTETQEKK).

This sequence belongs to the RimP family.

It localises to the cytoplasm. In terms of biological role, required for maturation of 30S ribosomal subunits. In Brucella abortus (strain S19), this protein is Ribosome maturation factor RimP.